We begin with the raw amino-acid sequence, 77 residues long: Large ribosomal subunit protein bL28 (77 aa).

This sequence belongs to the bacterial ribosomal protein bL28 family.

The polypeptide is Large ribosomal subunit protein bL28 (Cupriavidus necator (strain ATCC 17699 / DSM 428 / KCTC 22496 / NCIMB 10442 / H16 / Stanier 337) (Ralstonia eutropha)).